The chain runs to 387 residues: Arrestin-C (387 aa).

Belongs to the arrestin family. As to expression, retina and pineal gland.

Its function is as follows. May play a role in an as yet undefined retina-specific signal transduction. Could bind to photoactivated-phosphorylated red/green opsins. This chain is Arrestin-C (arr3), found in Xenopus laevis (African clawed frog).